The primary structure comprises 634 residues: Endoribonuclease rege-1 (634 aa).

Disordered stretches follow at residues 1 to 33 (MDST…STPH), 90 to 113 (SHPS…APMI), and 156 to 223 (KMGL…NPDP). Positions 97–106 (ESSDPSKIDD) are enriched in basic and acidic residues. 2 stretches are compositionally biased toward low complexity: residues 182-194 (SSAS…SSSS) and 201-217 (SVSI…STPS). The RNase NYN domain occupies 225–377 (LRAVVVDGSN…PSGRHGPRIE (153 aa)). Position 314 (Asp-314) interacts with Mg(2+). The C3H1-type zinc-finger motif lies at 387 to 412 (SSNPLVCPYARKCTYGNKCKFYHPER).

The protein belongs to the ZC3H12 family. The cofactor is Mg(2+). Expressed in the intestinal cells adjacent to the pharynx.

It localises to the cytoplasm. Endonuclease which binds to the 3'UTR of target mRNAs and induces degradation of the transcript. Acts together with rle-1 to repress the expression of the transcription factor ets-4 by binding to the conserved ADE (alternate decay element) and RCE (REGE-1 cleavage element) stem loop structure in its 3'UTR, which controls the expression of genes in the IIS and TORC1 pathways, including those involved in lipid metabolism and autophagosome formation. May play a role in the clearance of apoptotic cell corpses. The polypeptide is Endoribonuclease rege-1 (Caenorhabditis elegans).